The sequence spans 391 residues: Formate-dependent phosphoribosylglycinamide formyltransferase (391 aa).

N(1)-(5-phospho-beta-D-ribosyl)glycinamide contacts are provided by residues 18–19 (EL) and Glu-78. Residues Arg-110, Lys-151, 156–161 (SSGKGQ), 191–194 (EEFI), and Glu-199 each bind ATP. Residues 115 to 305 (ELAHEELGIR…EFELHLRAIL (191 aa)) enclose the ATP-grasp domain. Mg(2+) is bound by residues Glu-264 and Glu-276. Residues Asp-283, Lys-353, and 360-361 (RR) each bind N(1)-(5-phospho-beta-D-ribosyl)glycinamide.

The protein belongs to the PurK/PurT family. Homodimer.

The enzyme catalyses N(1)-(5-phospho-beta-D-ribosyl)glycinamide + formate + ATP = N(2)-formyl-N(1)-(5-phospho-beta-D-ribosyl)glycinamide + ADP + phosphate + H(+). It participates in purine metabolism; IMP biosynthesis via de novo pathway; N(2)-formyl-N(1)-(5-phospho-D-ribosyl)glycinamide from N(1)-(5-phospho-D-ribosyl)glycinamide (formate route): step 1/1. In terms of biological role, involved in the de novo purine biosynthesis. Catalyzes the transfer of formate to 5-phospho-ribosyl-glycinamide (GAR), producing 5-phospho-ribosyl-N-formylglycinamide (FGAR). Formate is provided by PurU via hydrolysis of 10-formyl-tetrahydrofolate. The polypeptide is Formate-dependent phosphoribosylglycinamide formyltransferase (Nostoc sp. (strain PCC 7120 / SAG 25.82 / UTEX 2576)).